A 360-amino-acid polypeptide reads, in one-letter code: Sorbitol dehydrogenase (360 aa).

Zn(2+) is bound at residue C42. Y48 serves as a coordination point for substrate. 2 residues coordinate Zn(2+): H67 and E68. E153 contributes to the substrate binding site. Residues D201, R206, 277–279, and 301–303 contribute to the NAD(+) site; these read AGN and SFR. 2 residues coordinate substrate: R303 and Y304.

Belongs to the zinc-containing alcohol dehydrogenase family. In terms of assembly, homotetramer. Zn(2+) is required as a cofactor.

The catalysed reaction is keto-D-fructose + NADH + H(+) = D-sorbitol + NAD(+). In terms of biological role, polyol dehydrogenase that catalyzes the reversible NAD(+)-dependent oxidation of various sugar alcohols. Is active with D-sorbitol (D-glucitol) as substrate, leading to the C2-oxidized product D-fructose. Suppresses growth arrest induced by a p53 tumor mutant in fission yeast. The chain is Sorbitol dehydrogenase (tms1) from Schizosaccharomyces pombe (strain 972 / ATCC 24843) (Fission yeast).